A 354-amino-acid chain; its full sequence is 3-dehydroquinate synthase (354 aa).

Residues 106-110, 130-131, lysine 143, and lysine 152 each bind NAD(+); these read GVIGD and TS. Residues glutamate 185, histidine 246, and histidine 262 each coordinate Zn(2+).

This sequence belongs to the sugar phosphate cyclases superfamily. Dehydroquinate synthase family. It depends on Co(2+) as a cofactor. The cofactor is Zn(2+). NAD(+) serves as cofactor.

It is found in the cytoplasm. It carries out the reaction 7-phospho-2-dehydro-3-deoxy-D-arabino-heptonate = 3-dehydroquinate + phosphate. It functions in the pathway metabolic intermediate biosynthesis; chorismate biosynthesis; chorismate from D-erythrose 4-phosphate and phosphoenolpyruvate: step 2/7. Catalyzes the conversion of 3-deoxy-D-arabino-heptulosonate 7-phosphate (DAHP) to dehydroquinate (DHQ). The polypeptide is 3-dehydroquinate synthase (Leuconostoc mesenteroides subsp. mesenteroides (strain ATCC 8293 / DSM 20343 / BCRC 11652 / CCM 1803 / JCM 6124 / NCDO 523 / NBRC 100496 / NCIMB 8023 / NCTC 12954 / NRRL B-1118 / 37Y)).